The following is a 619-amino-acid chain: 1-deoxy-D-xylulose-5-phosphate synthase (619 aa).

Residues His63 and 104 to 106 (GHS) each bind thiamine diphosphate. Asp136 lines the Mg(2+) pocket. Residues 137-138 (GS), Asn165, Tyr272, and Glu353 each bind thiamine diphosphate. Position 165 (Asn165) interacts with Mg(2+).

This sequence belongs to the transketolase family. DXPS subfamily. As to quaternary structure, homodimer. The cofactor is Mg(2+). Requires thiamine diphosphate as cofactor.

It catalyses the reaction D-glyceraldehyde 3-phosphate + pyruvate + H(+) = 1-deoxy-D-xylulose 5-phosphate + CO2. It functions in the pathway metabolic intermediate biosynthesis; 1-deoxy-D-xylulose 5-phosphate biosynthesis; 1-deoxy-D-xylulose 5-phosphate from D-glyceraldehyde 3-phosphate and pyruvate: step 1/1. In terms of biological role, catalyzes the acyloin condensation reaction between C atoms 2 and 3 of pyruvate and glyceraldehyde 3-phosphate to yield 1-deoxy-D-xylulose-5-phosphate (DXP). The chain is 1-deoxy-D-xylulose-5-phosphate synthase from Wolinella succinogenes (strain ATCC 29543 / DSM 1740 / CCUG 13145 / JCM 31913 / LMG 7466 / NCTC 11488 / FDC 602W) (Vibrio succinogenes).